The following is a 134-amino-acid chain: S-adenosylmethionine decarboxylase proenzyme (134 aa).

The Schiff-base intermediate with substrate; via pyruvic acid role is filled by S64. S64 is subject to Pyruvic acid (Ser); by autocatalysis. H69 serves as the catalytic Proton acceptor; for processing activity. C84 acts as the Proton donor; for catalytic activity in catalysis.

The protein belongs to the prokaryotic AdoMetDC family. Type 1 subfamily. Heterotetramer of two alpha and two beta chains arranged as a dimer of alpha/beta heterodimers. It depends on pyruvate as a cofactor. Is synthesized initially as an inactive proenzyme. Formation of the active enzyme involves a self-maturation process in which the active site pyruvoyl group is generated from an internal serine residue via an autocatalytic post-translational modification. Two non-identical subunits are generated from the proenzyme in this reaction, and the pyruvate is formed at the N-terminus of the alpha chain, which is derived from the carboxyl end of the proenzyme. The post-translation cleavage follows an unusual pathway, termed non-hydrolytic serinolysis, in which the side chain hydroxyl group of the serine supplies its oxygen atom to form the C-terminus of the beta chain, while the remainder of the serine residue undergoes an oxidative deamination to produce ammonia and the pyruvoyl group blocking the N-terminus of the alpha chain.

It carries out the reaction S-adenosyl-L-methionine + H(+) = S-adenosyl 3-(methylsulfanyl)propylamine + CO2. The protein operates within amine and polyamine biosynthesis; S-adenosylmethioninamine biosynthesis; S-adenosylmethioninamine from S-adenosyl-L-methionine: step 1/1. In terms of biological role, catalyzes the decarboxylation of S-adenosylmethionine to S-adenosylmethioninamine (dcAdoMet), the propylamine donor required for the synthesis of the polyamines spermine and spermidine from the diamine putrescine. In Hydrogenobaculum sp. (strain Y04AAS1), this protein is S-adenosylmethionine decarboxylase proenzyme.